The primary structure comprises 422 residues: MQQPQPQGQQQPGPGQQLGVQGAAPGAGGGPGGGPGPGPCLRRELKLLESIFHRGHERFRIASACLDELSCEFLLAGAGGAGAGAAPGPHLPSRGSVPGDPVRIHCNITESYPAVPPIWSVESDDPNLAAVLERLVDIKKGNTLLLQHLKRIISDLCKLYNLPQHPDVEMLDQPLPAEQCTQEEVSSEDEDEEMPEDTEDLDHYEMKEEEPAEGKKSEDDGIGKENLAILEKIKKNQRQDYLNGAVSGSVQATDRLMKELRDIYRSQSFKGGNYAVELVNDSLYDWNVKLLKVDQDSALHNDLQILKEKEGADFILLNFSFKDNFPFDPPFVRVVSPVLSGGYVLGGGAICMELLTKQGWSSAYSIESVIMQISATLVKGKARVQFGANKSQYSLTRAQQSYKSLVQIHEKNGWYTPPKEDG.

Met1 carries the N-acetylmethionine modification. Low complexity predominate over residues 1–24; the sequence is MQQPQPQGQQQPGPGQQLGVQGAA. Disordered stretches follow at residues 1–40 and 173–221; these read MQQP…PGPC and QPLP…EDDG. Residues 25–35 are compositionally biased toward gly residues; sequence PGAGGGPGGGP. A compositionally biased stretch (acidic residues) spans 185–200; sequence VSSEDEDEEMPEDTED. Over residues 212-221 the composition is skewed to basic and acidic residues; that stretch reads AEGKKSEDDG. In terms of domain architecture, UBC core spans 251-415; the sequence is QATDRLMKEL…VQIHEKNGWY (165 aa). Cys351 functions as the Glycyl thioester intermediate in the catalytic mechanism.

Belongs to the ubiquitin-conjugating enzyme family. In terms of assembly, monomer and homodimer. Only the homodimer is linked to ubiquitin through thiolester activation. Interacts (via N-terminus) with B4GALT1 (via N-terminal cytoplasmic domain); the interaction is direct. Autoubiquitinated in vitro in the presence of NEDD4L. In terms of tissue distribution, expressed in liver, brain, heart, spleen, lung, kidney, muscle, ovary, epididymis, testis and placenta. Also expressed in thymus and ES cells. Only expressed in the uterus during pregnancy. Expressed in oocytes and during subsequent embryonic development stages (4-cell stage, blastocyst, 8.5 dpc, 13.5 dpc, 16.5 dpc and 18.5 dpc).

It localises to the nucleus. Its subcellular location is the cell projection. The protein localises to the filopodium. The protein resides in the cytoplasm. It is found in the cytosol. The enzyme catalyses S-ubiquitinyl-[E1 ubiquitin-activating enzyme]-L-cysteine + [E2 ubiquitin-conjugating enzyme]-L-cysteine = [E1 ubiquitin-activating enzyme]-L-cysteine + S-ubiquitinyl-[E2 ubiquitin-conjugating enzyme]-L-cysteine.. It participates in protein modification; protein ubiquitination. Its function is as follows. Catalyzes the covalent attachment of ubiquitin to other proteins. Involved in female fertility and embryo implantation. May be involved in hormonal homeostasis in females. Involved in regulation of B4GALT1 cell surface expression, B4GALT1-mediated cell adhesion to laminin and embryoid body formation. This chain is Ubiquitin-conjugating enzyme E2 Q1 (Ube2q1), found in Mus musculus (Mouse).